Here is a 242-residue protein sequence, read N- to C-terminus: Large ribosomal subunit protein uL1 (242 aa).

This sequence belongs to the universal ribosomal protein uL1 family. In terms of assembly, part of the 50S ribosomal subunit.

In terms of biological role, binds directly to 23S rRNA. The L1 stalk is quite mobile in the ribosome, and is involved in E site tRNA release. Functionally, protein L1 is also a translational repressor protein, it controls the translation of the L11 operon by binding to its mRNA. In Kitasatospora aureofaciens (Streptomyces aureofaciens), this protein is Large ribosomal subunit protein uL1.